Here is a 204-residue protein sequence, read N- to C-terminus: Protein OPG030 (204 aa).

Residues 95 to 177 (FLRQYINNNI…ITYSELTNAI (83 aa)) enclose the BACK domain.

This sequence belongs to the orthopoxvirus OPG030 family.

This Bos taurus (Bovine) protein is Protein OPG030 (OPG30).